The sequence spans 179 residues: Peptidyl-tRNA hydrolase 2, mitochondrial (179 aa).

Residues 10–32 (YLTNPGALSLAAGVACGVCLGWG) form a helical membrane-spanning segment. Glycyl lysine isopeptide (Lys-Gly) (interchain with G-Cter in ubiquitin) cross-links involve residues Lys-76, Lys-81, Lys-95, Lys-106, Lys-115, Lys-171, and Lys-177.

Belongs to the PTH2 family. As to quaternary structure, monomer. In terms of processing, ubiquitinated by PRKN during mitophagy, leading to its degradation and enhancement of mitophagy. Deubiquitinated by USP30.

The protein localises to the mitochondrion outer membrane. It catalyses the reaction an N-acyl-L-alpha-aminoacyl-tRNA + H2O = an N-acyl-L-amino acid + a tRNA + H(+). Its function is as follows. Peptidyl-tRNA hydrolase which releases tRNAs from the ribosome during protein synthesis. Promotes caspase-independent apoptosis by regulating the function of two transcriptional regulators, AES and TLE1. The protein is Peptidyl-tRNA hydrolase 2, mitochondrial (PTRH2) of Bos taurus (Bovine).